A 506-amino-acid chain; its full sequence is 2,3-bisphosphoglycerate-independent phosphoglycerate mutase (506 aa).

Mn(2+) contacts are provided by Asp13 and Ser63. The Phosphoserine intermediate role is filled by Ser63. Substrate contacts are provided by residues His124, 153-154 (RD), Arg183, Arg189, 254-257 (RADR), and Lys330. Positions 396, 400, 437, 438, and 456 each coordinate Mn(2+).

Belongs to the BPG-independent phosphoglycerate mutase family. As to quaternary structure, monomer. Mn(2+) is required as a cofactor.

It carries out the reaction (2R)-2-phosphoglycerate = (2R)-3-phosphoglycerate. It functions in the pathway carbohydrate degradation; glycolysis; pyruvate from D-glyceraldehyde 3-phosphate: step 3/5. Catalyzes the interconversion of 2-phosphoglycerate and 3-phosphoglycerate. The chain is 2,3-bisphosphoglycerate-independent phosphoglycerate mutase from Cereibacter sphaeroides (strain KD131 / KCTC 12085) (Rhodobacter sphaeroides).